The sequence spans 408 residues: Lupus La protein (408 aa).

Positions 7–99 (NEKMAALEAK…RRSPSKPLPE (93 aa)) constitute an HTH La-type RNA-binding domain. Phosphoserine occurs at positions 92 and 94. The RRM domain maps to 111–187 (RSVYIKGFPT…TDLLILFKDD (77 aa)). Residue Lys-116 is modified to N6-acetyllysine. Thr-120 carries the post-translational modification Phosphothreonine. Lys-128 is subject to N6-acetyllysine. Ser-225 carries the phosphoserine modification. A xRRM domain is found at 227–348 (EEKIGCLLKF…KGKGNKAAQP (122 aa)). N6-acetyllysine is present on residues Lys-328, Lys-341, and Lys-360. Residues 329–342 (WKSKGRRFKGKGKG) are compositionally biased toward basic residues. The segment at 329–408 (WKSKGRRFKG…QKTENGAGDQ (80 aa)) is disordered. Thr-362 is subject to Phosphothreonine. At Ser-366 the chain carries Phosphoserine; by CK2. Over residues 384 to 395 (RAREETDKEEPA) the composition is skewed to basic and acidic residues.

Interacts with DDX15. May interact with RUFY1. Phosphorylated. The phosphorylation sites are at the C-terminal part of the protein. In terms of processing, the N-terminus is blocked.

The protein localises to the nucleus. In terms of biological role, binds to the 3' poly(U) terminus of nascent RNA polymerase III transcripts, protecting them from exonuclease digestion and facilitating their folding and maturation. In case of Coxsackievirus B3 infection, binds to the viral internal ribosome entry site (IRES) and stimulates the IRES-mediated translation. The protein is Lupus La protein (SSB) of Homo sapiens (Human).